Here is a 489-residue protein sequence, read N- to C-terminus: Glucose-1-phosphate adenylyltransferase small subunit, chloroplastic/amyloplastic (489 aa).

A chloroplast-targeting transit peptide spans 1–52 (ITVPSTSSKNLQNSLAFSSSSLSGDKIQTTSFLNRRYCRISSRAPIVVSPKA).

The protein belongs to the bacterial/plant glucose-1-phosphate adenylyltransferase family. Heterotetramer. Prominently expressed in the leaves. A lower level expression is seen in the roots.

It localises to the plastid. The protein resides in the chloroplast. It is found in the amyloplast. It carries out the reaction alpha-D-glucose 1-phosphate + ATP + H(+) = ADP-alpha-D-glucose + diphosphate. It functions in the pathway glycan biosynthesis; starch biosynthesis. Its activity is regulated as follows. Activated by 3'phosphoglycerate, inhibited by orthophosphate. Allosteric regulation. This protein plays a role in synthesis of starch. It catalyzes the synthesis of the activated glycosyl donor, ADP-glucose from Glc-1-P and ATP. The protein is Glucose-1-phosphate adenylyltransferase small subunit, chloroplastic/amyloplastic (AGPB1) of Beta vulgaris (Sugar beet).